The following is a 302-amino-acid chain: MQFDELLTEQRNHRSTHIDRESTLEMVATINREDHRVARAVQKELPQIAAAIDAAYPKFDQGGRLIYVGAGTSGRLGVMDATEIQPTYGLTAEQTFGLIAGGEPALTHTVKAAEDSIELAQEDLAAVQLTAQDIVVASAASGQTPYTLAALQYAQEKGALGIGFSCVEDSPLAQLANYPITPVVGPEVITGATLLKAGTAEKMVLNMLSTGIMVKSGKVYQNLMINVVPTNGKTFERAKKIIAEATQTSLLAAERALERANNHVPLAIVLIETKGTIAEAKALLAATNGHVSQAVKLNDKQH.

The 164-residue stretch at 55 to 218 folds into the SIS domain; the sequence is AYPKFDQGGR…STGIMVKSGK (164 aa). Glu-83 acts as the Proton donor in catalysis. Residue Glu-114 is part of the active site.

This sequence belongs to the GCKR-like family. MurNAc-6-P etherase subfamily. Homodimer.

It catalyses the reaction N-acetyl-D-muramate 6-phosphate + H2O = N-acetyl-D-glucosamine 6-phosphate + (R)-lactate. It functions in the pathway amino-sugar metabolism; N-acetylmuramate degradation. Its function is as follows. Specifically catalyzes the cleavage of the D-lactyl ether substituent of MurNAc 6-phosphate, producing GlcNAc 6-phosphate and D-lactate. The protein is N-acetylmuramic acid 6-phosphate etherase of Levilactobacillus brevis (strain ATCC 367 / BCRC 12310 / CIP 105137 / JCM 1170 / LMG 11437 / NCIMB 947 / NCTC 947) (Lactobacillus brevis).